Reading from the N-terminus, the 100-residue chain is Small ribosomal subunit protein uS14c (100 aa).

This sequence belongs to the universal ribosomal protein uS14 family. Part of the 30S ribosomal subunit.

It localises to the plastid. Its subcellular location is the chloroplast. Functionally, binds 16S rRNA, required for the assembly of 30S particles. The sequence is that of Small ribosomal subunit protein uS14c from Arabis hirsuta (Hairy rock-cress).